Consider the following 94-residue polypeptide: Large ribosomal subunit protein bL25 (94 aa).

Belongs to the bacterial ribosomal protein bL25 family. Part of the 50S ribosomal subunit; part of the 5S rRNA/L5/L18/L25 subcomplex. Contacts the 5S rRNA. Binds to the 5S rRNA independently of L5 and L18.

Its function is as follows. This is one of the proteins that binds to the 5S RNA in the ribosome where it forms part of the central protuberance. The protein is Large ribosomal subunit protein bL25 of Salmonella arizonae (strain ATCC BAA-731 / CDC346-86 / RSK2980).